Reading from the N-terminus, the 213-residue chain is NADH dehydrogenase [ubiquinone] iron-sulfur protein 7, mitochondrial (213 aa).

A mitochondrion-targeting transit peptide spans 1–37 (MAVLSAPGLRGFRILGLRSSVGPAVQARSVHQSVATD). Over residues 30–44 (VHQSVATDGPSSTQP) the composition is skewed to polar residues. The disordered stretch occupies residues 30 to 53 (VHQSVATDGPSSTQPALPKARAVA). [4Fe-4S] cluster contacts are provided by C88 and C89. R111 carries the hydroxyarginine modification. [4Fe-4S] cluster is bound by residues C153 and C183.

This sequence belongs to the complex I 20 kDa subunit family. In terms of assembly, core subunit of respiratory chain NADH dehydrogenase (Complex I) which is composed of 45 different subunits. This is a component of the iron-sulfur (IP) fragment of the enzyme. Requires [4Fe-4S] cluster as cofactor. Post-translationally, hydroxylated ar Arg-111 by NDUFAF5 early in the pathway of assembly of complex I, before the formation of the juncture between peripheral and membrane arms.

It is found in the mitochondrion inner membrane. It catalyses the reaction a ubiquinone + NADH + 5 H(+)(in) = a ubiquinol + NAD(+) + 4 H(+)(out). Core subunit of the mitochondrial membrane respiratory chain NADH dehydrogenase (Complex I) which catalyzes electron transfer from NADH through the respiratory chain, using ubiquinone as an electron acceptor. Essential for the catalytic activity of complex I. The protein is NADH dehydrogenase [ubiquinone] iron-sulfur protein 7, mitochondrial (NDUFS7) of Pan troglodytes (Chimpanzee).